A 255-amino-acid chain; its full sequence is Triosephosphate isomerase (255 aa).

10–12 (NWK) contacts substrate. H96 functions as the Electrophile in the catalytic mechanism. E168 serves as the catalytic Proton acceptor. Substrate-binding positions include G174, S213, and 234–235 (GG).

Belongs to the triosephosphate isomerase family. As to quaternary structure, homodimer.

It localises to the cytoplasm. It carries out the reaction D-glyceraldehyde 3-phosphate = dihydroxyacetone phosphate. Its pathway is carbohydrate biosynthesis; gluconeogenesis. It participates in carbohydrate degradation; glycolysis; D-glyceraldehyde 3-phosphate from glycerone phosphate: step 1/1. Its function is as follows. Involved in the gluconeogenesis. Catalyzes stereospecifically the conversion of dihydroxyacetone phosphate (DHAP) to D-glyceraldehyde-3-phosphate (G3P). This is Triosephosphate isomerase from Histophilus somni (strain 129Pt) (Haemophilus somnus).